The following is a 134-amino-acid chain: Profilin-3 (134 aa).

C13 and C118 form a disulfide bridge. The Involved in PIP2 interaction signature appears at 84–100 (AVIRGKKGSGGITIKKT). Position 114 is a phosphothreonine (T114).

It belongs to the profilin family. Occurs in many kinds of cells as a complex with monomeric actin in a 1:1 ratio. Phosphorylated by MAP kinases.

It localises to the cytoplasm. The protein resides in the cytoskeleton. Functionally, binds to actin and affects the structure of the cytoskeleton. At high concentrations, profilin prevents the polymerization of actin, whereas it enhances it at low concentrations. By binding to PIP2, it inhibits the formation of IP3 and DG. The sequence is that of Profilin-3 (PRO3) from Olea europaea (Common olive).